A 217-amino-acid polypeptide reads, in one-letter code: Transcriptional regulator NovE (217 aa).

Residues 1–41 (MVASGRTASKGRGNGATPVRPTAGDATPVDSGQPSDTTYGG) are disordered.

Functionally, transcription regulator that specifically regulates expression of genes involved in the novobiocin biosynthesis pathway. Probably acts as a positive regulator of transcription. Does not bind DNA. In Streptomyces niveus (Streptomyces spheroides), this protein is Transcriptional regulator NovE (novE).